The sequence spans 1603 residues: Transcription factor Gibbin (1603 aa).

4 disordered regions span residues 19-108, 150-236, 264-285, and 394-467; these read PDYL…SSSR, LRLS…STDY, LEPP…FLDP, and CRRR…RKGK. Residues 30-47 show a composition bias toward pro residues; that stretch reads GGPPTPRPLLPTRPPASP. K79 bears the N6-acetyllysine mark. Positions 166–178 are enriched in polar residues; the sequence is SFFSSPSLANSIR. Positions 179–194 are enriched in basic and acidic residues; sequence SPEERATPHAKSERPS. Residues 216–225 show a composition bias toward low complexity; that stretch reads PGATAAATGL. S268 is subject to Phosphoserine. A compositionally biased stretch (low complexity) spans 273–285; it reads PQLLDPQPRFLDP. The a.T hook 1 DNA-binding region spans 396–408; the sequence is RRKAGRGRKADAG. The span at 428-446 shows a compositional bias: pro residues; sequence EPPPPPPPPPPALPGPGPV. Positions 544–556 form a DNA-binding region, a.T hook 2; the sequence is KRKRGRPPKNLLL. The disordered stretch occupies residues 581-607; it reads MPEVKKRRRRKQKLASPQPSYAADAND. S596 carries the post-translational modification Phosphoserine. K609 is covalently cross-linked (Glycyl lysine isopeptide (Lys-Gly) (interchain with G-Cter in SUMO2)). Disordered stretches follow at residues 717 to 792 and 806 to 827; these read LTEL…RNCG and LESG…GQTE. Over residues 737 to 746 the composition is skewed to basic residues; the sequence is KPKRKRRSRK. A compositionally biased stretch (polar residues) spans 816-827; the sequence is YYSTGAPSGQTE. Residues S829 and S846 each carry the phosphoserine modification. Residue R891 is modified to Omega-N-methylarginine. Phosphoserine occurs at positions 896 and 1064. Disordered regions lie at residues 1159–1198 and 1253–1286; these read VSET…QSSL and ASAA…KKER. Composition is skewed to low complexity over residues 1160–1171 and 1187–1198; these read SETFSESSSDST and SEASSSEGQSSL. S1187 is subject to Phosphoserine. Phosphoserine occurs at positions 1322, 1324, and 1399. Phosphothreonine is present on T1401. Residue S1403 is modified to Phosphoserine. K1409 is covalently cross-linked (Glycyl lysine isopeptide (Lys-Gly) (interchain with G-Cter in SUMO2)). Residues 1503 to 1533 form a disordered region; that stretch reads PHLASPPATPKADKEPLEMARPPGPPRGPAA. Phosphoserine occurs at positions 1507 and 1549.

The protein resides in the nucleus. It localises to the chromosome. Transcription factor required for the proper patterning of the epidermis, which plays a key role in early epithelial morphogenesis. Directly binds promoter and enhancer regions and acts by maintaining local enhancer-promoter chromatin architecture. Interacts with many sequence-specific zinc-finger transcription factors and methyl-CpG-binding proteins to regulate the expression of mesoderm genes that wire surface ectoderm stratification. This Homo sapiens (Human) protein is Transcription factor Gibbin.